An 80-amino-acid polypeptide reads, in one-letter code: MSQEAILEKVRSIVAEQLSVEAGEVKPDSNFQNDLGADSLDTVELVMALEEAFDIEIPDEAAEGIATVGDAVKYIEEKQS.

In terms of domain architecture, Carrier spans 4-79; sequence EAILEKVRSI…DAVKYIEEKQ (76 aa). Serine 39 carries the post-translational modification O-(pantetheine 4'-phosphoryl)serine.

The protein belongs to the acyl carrier protein (ACP) family. Post-translationally, 4'-phosphopantetheine is transferred from CoA to a specific serine of apo-ACP by AcpS. This modification is essential for activity because fatty acids are bound in thioester linkage to the sulfhydryl of the prosthetic group.

Its subcellular location is the cytoplasm. It participates in lipid metabolism; fatty acid biosynthesis. Functionally, carrier of the growing fatty acid chain in fatty acid biosynthesis. The protein is Acyl carrier protein of Prochlorococcus marinus (strain NATL1A).